Reading from the N-terminus, the 111-residue chain is Nucleoid-associated protein NMA1657 (111 aa).

Belongs to the YbaB/EbfC family. In terms of assembly, homodimer.

The protein localises to the cytoplasm. The protein resides in the nucleoid. In terms of biological role, binds to DNA and alters its conformation. May be involved in regulation of gene expression, nucleoid organization and DNA protection. The protein is Nucleoid-associated protein NMA1657 of Neisseria meningitidis serogroup A / serotype 4A (strain DSM 15465 / Z2491).